We begin with the raw amino-acid sequence, 32 residues long: Potassium channel toxin alpha-KTx 10.6 (32 aa).

3 disulfide bridges follow: Cys-3–Cys-22, Cys-8–Cys-27, and Cys-12–Cys-29.

Expressed by the venom gland.

The protein localises to the secreted. In terms of biological role, blocks human voltage-gated potassium (Kv) channels Kv1.2/KCNA2 and Kv1.3/KCNA3. Does not block human Kv1.1 at 100nM concentration. The protein is Potassium channel toxin alpha-KTx 10.6 of Centruroides bonito (Scorpion).